A 138-amino-acid polypeptide reads, in one-letter code: uncharacterized protein (138 aa).

A run of 3 helical transmembrane segments spans residues 12-32 (LHFL…VLPI), 62-82 (LIAV…FSVL), and 111-131 (FHWV…LICS).

Its subcellular location is the cell membrane. This is an uncharacterized protein from Haemophilus influenzae (strain ATCC 51907 / DSM 11121 / KW20 / Rd).